The following is a 364-amino-acid chain: Succinyl-diaminopimelate desuccinylase (364 aa).

Zn(2+) is bound at residue His66. Asp68 is a catalytic residue. Asp97 contributes to the Zn(2+) binding site. Catalysis depends on Glu127, which acts as the Proton acceptor. Positions 128, 156, and 341 each coordinate Zn(2+).

Belongs to the peptidase M20A family. DapE subfamily. Homodimer. The cofactor is Zn(2+). Co(2+) is required as a cofactor.

The catalysed reaction is N-succinyl-(2S,6S)-2,6-diaminopimelate + H2O = (2S,6S)-2,6-diaminopimelate + succinate. Its pathway is amino-acid biosynthesis; L-lysine biosynthesis via DAP pathway; LL-2,6-diaminopimelate from (S)-tetrahydrodipicolinate (succinylase route): step 3/3. Functionally, catalyzes the hydrolysis of N-succinyl-L,L-diaminopimelic acid (SDAP), forming succinate and LL-2,6-diaminopimelate (DAP), an intermediate involved in the bacterial biosynthesis of lysine and meso-diaminopimelic acid, an essential component of bacterial cell walls. The sequence is that of Succinyl-diaminopimelate desuccinylase from Wolinella succinogenes (strain ATCC 29543 / DSM 1740 / CCUG 13145 / JCM 31913 / LMG 7466 / NCTC 11488 / FDC 602W) (Vibrio succinogenes).